Consider the following 471-residue polypeptide: Probable pyruvate, phosphate dikinase regulatory protein, chloroplastic (471 aa).

A chloroplast-targeting transit peptide spans 1-49 (MSSSSSTSPRFGSMISAKLASPPPSLLLPPSPRLQGRRLTPPSCTPGTP). The segment at 1–133 (MSSSSSTSPR…PHPSSDEAAS (133 aa)) is disordered. Over residues 21–32 (SPPPSLLLPPSP) the composition is skewed to pro residues. A compositionally biased stretch (polar residues) spans 71–88 (GSATTPRSPAQLGSSQLH). Over residues 89–99 (RWSRARAHRSG) the composition is skewed to basic residues. A compositionally biased stretch (basic and acidic residues) spans 100-111 (RRLEWPTIRDRG). 171 to 178 (HSVNAALG) is a binding site for ADP.

The protein belongs to the pyruvate, phosphate/water dikinase regulatory protein family. PDRP subfamily.

Its subcellular location is the plastid. It localises to the chloroplast. It carries out the reaction N(tele)-phospho-L-histidyl/L-threonyl-[pyruvate, phosphate dikinase] + ADP = N(tele)-phospho-L-histidyl/O-phospho-L-threonyl-[pyruvate, phosphate dikinase] + AMP + H(+). The catalysed reaction is N(tele)-phospho-L-histidyl/O-phospho-L-threonyl-[pyruvate, phosphate dikinase] + phosphate + H(+) = N(tele)-phospho-L-histidyl/L-threonyl-[pyruvate, phosphate dikinase] + diphosphate. With respect to regulation, regulated by light/dark exposure. Functionally, bifunctional serine/threonine kinase and phosphorylase involved in the dark/light-mediated regulation of PPDK by catalyzing its phosphorylation/dephosphorylation. Dark/light-induced changes in stromal concentrations of the competing ADP and Pi substrates govern the direction of the reaction. In the dark, phosphorylates the catalytic intermediate of PPDK (PPDK-HisP), inactivating it. Light exposure induces the phosphorolysis reaction that reactivates PPDK. This Oryza sativa subsp. indica (Rice) protein is Probable pyruvate, phosphate dikinase regulatory protein, chloroplastic (PDRP1).